The chain runs to 653 residues: Thioredoxin domain-containing protein 3 homolog (653 aa).

The Thioredoxin domain occupies 9–114 (LQETLNTQEA…QETIQETLKN (106 aa)). An intrachain disulfide couples Cys-38 to Cys-41. Positions 155–299 (KQITVALIKP…FFFPDFKPPT (145 aa)) are NDK 1. The tract at residues 300–323 (YRSAKSAASRASGRRSKTPSQKPR) is disordered. A compositionally biased stretch (low complexity) spans 301-310 (RSAKSAASRA). NDK regions lie at residues 324–459 (LQRT…IFHV) and 459–597 (VEQT…QFDW). Positions 603 to 653 (QAEEGEVNETSGEQPTDEQSGETEKTEEDGEHEGAQSDQQQAVSEAMEKEE) are disordered. Positions 617–633 (PTDEQSGETEKTEEDGE) are enriched in acidic residues.

It in the C-terminal section; belongs to the NDK family. In terms of tissue distribution, testis-specific.

Its function is as follows. May be required during the final stages of sperm tail maturation. May act by reducing disulfide bonds within the sperm components. The polypeptide is Thioredoxin domain-containing protein 3 homolog (CiIC3) (Ciona intestinalis (Transparent sea squirt)).